The following is a 917-amino-acid chain: MAISRRSLHAIILTVLLLAATAAPSQSGSRSRSRRKSERQSTNRGRDNNSIRGGVAQTPESSPLPALDLTPQPPMEKEEPDTLAPRASRDAPGTPKVPAMPGVTPEPSGNASEPADPAELRADLRGLKGSSDDPNFYVCPPPTGATVVRLEEPRPCPELPKGLNFTEGIAVTFKENLAPYKFKATMYYKAVTVASVWSGYSYNQFMNIFEDRAPIPFEEIVDRIHGRGMCLSTAKYVRNNLETTAFHNDADEHEMKLVPAESAPGLHRGWHTTRLKNNPTGSAWIHRHGTTVDCIVDEVEAKSSYPYNEFVLATGDFVYASPFFGYRDGSHSEHNAYAADRFKQVDGFFPRDFGTGRRHGSPVTYNLLTTPMFTVGWNWAPKRPSVCTMTKWREVPEMLRAEYGSSFRFTSNALSATFTTNLTQYSLSRVDLGDCVGKEAREAIDRIYLEKYNNTHLRVGSVQYYLATGGFLIAYQPLLSNNLADLYVKELMREQALKPEERKLNATTDGKVITTTSSVEFARLQFTYNHIQKHVNEMFGRMAVSWCELQNQELTLWNEAKKINPSAIASVTLHRRVSACMLGDVLAISTCVAVPAENVIMQNSMRIPSKPGTCYSRPLLSFKHVDGEELMEGQLGENNEIRLDRDAVEPCSVGHKRYFLFGAGYVYFEEYTYSHQLSRSDITAVSTFIDLNITMLEDHEFVPLEVYTRQEIKDSGLLDYAEVQRRNQLHALRFADIDTVIKADPNAAIFAGLHGFFEGLGDVGRAVGRVVLGVVGGVVATVSGVSSFLSNPFGALAIGLLVLGGLVAAFFAFRYVMRLQRNPMKALYPLTTKDLKHPSEGGGGEEAMEDFDEQKLDEARSMIKYMALVSAMERTKHKAGRRGGTSAILNARLTDMVMRKRGAKPKYEALPETDEDI.

The N-terminal stretch at 1-22 (MAISRRSLHAIILTVLLLAATA) is a signal peptide. The segment covering 21-30 (TAAPSQSGSR) has biased composition (low complexity). The segment at 21–117 (TAAPSQSGSR…SGNASEPADP (97 aa)) is disordered. Topologically, residues 23–792 (APSQSGSRSR…SGVSSFLSNP (770 aa)) are virion surface. The span at 38-49 (ERQSTNRGRDNN) shows a compositional bias: basic and acidic residues. N-linked (GlcNAc...) asparagine; by host glycans are attached at residues Asn48, Asn110, and Asn164. 5 disulfides stabilise this stretch: Cys139–Cys591, Cys156–Cys547, Cys230–Cys294, Cys387–Cys435, and Cys614–Cys651. Involved in fusion and/or binding to host membrane stretches follow at residues 196–202 (VWSGYSY) and 281–288 (GSAWIHRH). 3 N-linked (GlcNAc...) asparagine; by host glycosylation sites follow: Asn421, Asn453, and Asn505. An N-linked (GlcNAc...) asparagine; by host glycan is attached at Asn692. The hydrophobic membrane proximal region stretch occupies residues 737 to 790 (IDTVIKADPNAAIFAGLHGFFEGLGDVGRAVGRVVLGVVGGVVATVSGVSSFLS). The chain crosses the membrane as a helical span at residues 793–813 (FGALAIGLLVLGGLVAAFFAF). Residues 814 to 917 (RYVMRLQRNP…EALPETDEDI (104 aa)) are Intravirion-facing. The short motif at 865–868 (YMAL) is the Golgi targeting element. The Internalization motif motif lies at 907–910 (YEAL).

Belongs to the herpesviridae glycoprotein B family. As to quaternary structure, homotrimer; disulfide-linked. Binds to heparan sulfate proteoglycans. Interacts with gH/gL heterodimer. In terms of processing, a proteolytic cleavage by host furin generates two subunits that remain linked by disulfide bonds.

The protein resides in the virion membrane. Its subcellular location is the host cell membrane. It localises to the host endosome membrane. The protein localises to the host Golgi apparatus membrane. Its function is as follows. Envelope glycoprotein that forms spikes at the surface of virion envelope. Essential for the initial attachment to heparan sulfate moieties of the host cell surface proteoglycans. Involved in fusion of viral and cellular membranes leading to virus entry into the host cell. Following initial binding to its host receptors, membrane fusion is mediated by the fusion machinery composed at least of gB and the heterodimer gH/gL. May be involved in the fusion between the virion envelope and the outer nuclear membrane during virion egress. The polypeptide is Envelope glycoprotein B (Bovine herpesvirus 2 (strain BMV) (BoHV-2)).